The primary structure comprises 193 residues: Epididymal-specific lipocalin-12 (193 aa).

An N-terminal signal peptide occupies residues 1 to 19 (MGPWWALWLILTLPQILES). A disulfide bridge connects residues C88 and C193. N-linked (GlcNAc...) asparagine glycosylation is found at N143 and N172.

The protein belongs to the calycin superfamily. Lipocalin family. In terms of assembly, monomer. In terms of tissue distribution, expressed in epididymis.

Its subcellular location is the secreted. Functionally, binds all-trans retinoic acid and may act as a retinoid carrier protein within the epididymis. May play a role in male fertility. In Mus musculus (Mouse), this protein is Epididymal-specific lipocalin-12 (Lcn12).